A 306-amino-acid chain; its full sequence is Ribonuclease H2 subunit B (306 aa).

The interval 232-285 (LPDLSSPTPEPPVKKRRVSDAPVEADEDYTKYNSDNKSRKSNSKMTAAQKSLAK) is disordered. Positions 259–269 (DYTKYNSDNKS) are enriched in basic and acidic residues.

This sequence belongs to the RNase H2 subunit B family. The RNase H2 complex is a heterotrimer composed of the catalytic subunit RNASEH2A and the non-catalytic subunits RNASEH2B and RNASEH2C.

It localises to the nucleus. Functionally, non catalytic subunit of RNase H2, an endonuclease that specifically degrades the RNA of RNA:DNA hybrids. Participates in DNA replication, possibly by mediating the removal of lagging-strand Okazaki fragment RNA primers during DNA replication. Mediates the excision of single ribonucleotides from DNA:RNA duplexes. This chain is Ribonuclease H2 subunit B (rnaseh2b), found in Xenopus laevis (African clawed frog).